The following is a 286-amino-acid chain: Prepilin leader peptidase/N-methyltransferase (286 aa).

Residues 11–31 (LGIFFVGLFSLMVGSFLNVVI) traverse the membrane as a helical segment. Residues Cys-74, Cys-77, Cys-99, and Cys-102 each coordinate Zn(2+). Transmembrane regions (helical) follow at residues 106–126 (ISAR…IVAF), 132–152 (LSLG…FIDA), 161–181 (LTLP…FINL), 185–205 (VIGA…FKLI), 231–251 (LPII…GIGL), and 257–277 (MPFG…GAQI).

This sequence belongs to the peptidase A24 family. Zn(2+) is required as a cofactor.

The protein resides in the cell inner membrane. The catalysed reaction is Typically cleaves a -Gly-|-Phe- bond to release an N-terminal, basic peptide of 5-8 residues from type IV prepilin, and then N-methylates the new N-terminal amino group, the methyl donor being S-adenosyl-L-methionine.. In terms of biological role, plays an essential role in type IV pili and type II pseudopili formation by proteolytically removing the leader sequence from substrate proteins and subsequently monomethylating the alpha-amino group of the newly exposed N-terminal phenylalanine. The chain is Prepilin leader peptidase/N-methyltransferase (fimP) from Dichelobacter nodosus (Bacteroides nodosus).